Here is a 1155-residue protein sequence, read N- to C-terminus: Probable translation initiation factor IF-2 (1155 aa).

A DOD-type homing endonuclease domain is found at 237–367 (FAGVMFGDGC…LSILLLRFEI (131 aa)). Residues 561 to 781 (TTETHNFIAN…VAGLAQKFLE (221 aa)) enclose the tr-type G domain. Residues 634–638 (DTPGH) and 688–691 (NKID) contribute to the GTP site.

Belongs to the TRAFAC class translation factor GTPase superfamily. Classic translation factor GTPase family. IF-2 subfamily. This protein undergoes a protein self splicing that involves a post-translational excision of the intervening region (intein) followed by peptide ligation.

Function in general translation initiation by promoting the binding of the formylmethionine-tRNA to ribosomes. Seems to function along with eIF-2. This chain is Probable translation initiation factor IF-2 (infB), found in Methanocaldococcus jannaschii (strain ATCC 43067 / DSM 2661 / JAL-1 / JCM 10045 / NBRC 100440) (Methanococcus jannaschii).